A 558-amino-acid polypeptide reads, in one-letter code: Dihydroxy-acid dehydratase (558 aa).

Asp-78 is a binding site for Mg(2+). [2Fe-2S] cluster is bound at residue Cys-119. The Mg(2+) site is built by Asp-120 and Lys-121. Lys-121 carries the post-translational modification N6-carboxylysine. Cys-192 is a binding site for [2Fe-2S] cluster. Glu-446 provides a ligand contact to Mg(2+). The active-site Proton acceptor is Ser-472.

Belongs to the IlvD/Edd family. As to quaternary structure, homodimer. The cofactor is [2Fe-2S] cluster. It depends on Mg(2+) as a cofactor.

The enzyme catalyses (2R)-2,3-dihydroxy-3-methylbutanoate = 3-methyl-2-oxobutanoate + H2O. It carries out the reaction (2R,3R)-2,3-dihydroxy-3-methylpentanoate = (S)-3-methyl-2-oxopentanoate + H2O. It participates in amino-acid biosynthesis; L-isoleucine biosynthesis; L-isoleucine from 2-oxobutanoate: step 3/4. The protein operates within amino-acid biosynthesis; L-valine biosynthesis; L-valine from pyruvate: step 3/4. Functions in the biosynthesis of branched-chain amino acids. Catalyzes the dehydration of (2R,3R)-2,3-dihydroxy-3-methylpentanoate (2,3-dihydroxy-3-methylvalerate) into 2-oxo-3-methylpentanoate (2-oxo-3-methylvalerate) and of (2R)-2,3-dihydroxy-3-methylbutanoate (2,3-dihydroxyisovalerate) into 2-oxo-3-methylbutanoate (2-oxoisovalerate), the penultimate precursor to L-isoleucine and L-valine, respectively. The polypeptide is Dihydroxy-acid dehydratase (Campylobacter jejuni subsp. jejuni serotype O:23/36 (strain 81-176)).